Reading from the N-terminus, the 416-residue chain is Serine hydroxymethyltransferase (416 aa).

(6S)-5,6,7,8-tetrahydrofolate is bound by residues L121 and 125 to 127 (GHL). At K229 the chain carries N6-(pyridoxal phosphate)lysine.

It belongs to the SHMT family. Homodimer. The cofactor is pyridoxal 5'-phosphate.

It is found in the cytoplasm. It catalyses the reaction (6R)-5,10-methylene-5,6,7,8-tetrahydrofolate + glycine + H2O = (6S)-5,6,7,8-tetrahydrofolate + L-serine. It participates in one-carbon metabolism; tetrahydrofolate interconversion. The protein operates within amino-acid biosynthesis; glycine biosynthesis; glycine from L-serine: step 1/1. Its function is as follows. Catalyzes the reversible interconversion of serine and glycine with tetrahydrofolate (THF) serving as the one-carbon carrier. This reaction serves as the major source of one-carbon groups required for the biosynthesis of purines, thymidylate, methionine, and other important biomolecules. Also exhibits THF-independent aldolase activity toward beta-hydroxyamino acids, producing glycine and aldehydes, via a retro-aldol mechanism. This is Serine hydroxymethyltransferase from Dechloromonas aromatica (strain RCB).